Reading from the N-terminus, the 430-residue chain is Adenylosuccinate synthetase (430 aa).

Residues 12-18 (GDEGKGK) and 40-42 (GHT) each bind GTP. Asp-13 (proton acceptor) is an active-site residue. Positions 13 and 40 each coordinate Mg(2+). IMP-binding positions include 13–16 (DEGK), 38–41 (NAGH), Thr-130, Arg-144, Gln-224, Thr-239, and Arg-303. The active-site Proton donor is the His-41. 299-305 (TVTGRKR) is a binding site for substrate. Residues Arg-305, 331 to 333 (KLD), and 413 to 415 (STS) each bind GTP.

It belongs to the adenylosuccinate synthetase family. As to quaternary structure, homodimer. It depends on Mg(2+) as a cofactor.

Its subcellular location is the cytoplasm. It catalyses the reaction IMP + L-aspartate + GTP = N(6)-(1,2-dicarboxyethyl)-AMP + GDP + phosphate + 2 H(+). The protein operates within purine metabolism; AMP biosynthesis via de novo pathway; AMP from IMP: step 1/2. Plays an important role in the de novo pathway of purine nucleotide biosynthesis. Catalyzes the first committed step in the biosynthesis of AMP from IMP. The chain is Adenylosuccinate synthetase from Cereibacter sphaeroides (strain ATCC 17023 / DSM 158 / JCM 6121 / CCUG 31486 / LMG 2827 / NBRC 12203 / NCIMB 8253 / ATH 2.4.1.) (Rhodobacter sphaeroides).